Consider the following 377-residue polypeptide: Probable purine permease 22 (377 aa).

Helical transmembrane passes span 39–59, 71–91, 107–127, 128–148, 166–186, 202–222, 238–258, 283–303, 309–329, and 338–358; these read WLRVSIYAIFVIFCQPLATVL, TYVVTLLQLIGFPVLILFRFF, SPSFTTLASVYLCTGLLVSAY, AYLSAVGLLYLPVSTFSLILA, FTPLIVNSLFLLTVSSALLVV, VIGFICTIGASAGIGLVLSLI, VLDLANYQSLVATCVVLIGLF, TLASAAIFWQVYTVGCVGLIF, FSNSITAVGLPIVPVVAVIVF, and IFSIILAIWGFLSFVYQHYLD.

This sequence belongs to the purine permeases (TC 2.A.7.14) family.

The protein localises to the membrane. This Arabidopsis thaliana (Mouse-ear cress) protein is Probable purine permease 22 (PUP22).